The sequence spans 154 residues: uncharacterized protein (154 aa).

Helical transmembrane passes span 5–24 (TLII…GVLL), 29–48 (FYAA…IYAA), 53–75 (PVVV…AIAA), 87–109 (IFWV…SMAV), and 124–146 (ATDY…LSAI).

The protein localises to the cell membrane. This is an uncharacterized protein from Archaeoglobus fulgidus (strain ATCC 49558 / DSM 4304 / JCM 9628 / NBRC 100126 / VC-16).